The primary structure comprises 616 residues: Chaperone protein HscA homolog (616 aa).

This sequence belongs to the heat shock protein 70 family.

Chaperone involved in the maturation of iron-sulfur cluster-containing proteins. Has a low intrinsic ATPase activity which is markedly stimulated by HscB. This Vibrio cholerae serotype O1 (strain M66-2) protein is Chaperone protein HscA homolog.